Reading from the N-terminus, the 104-residue chain is Probable monothiol glutaredoxin 2 (104 aa).

Positions 7–104 (FEFIENEIKN…NGELEKMLKG (98 aa)) constitute a Glutaredoxin domain. Lys-24 lines the glutathione pocket. Cys-32 lines the [2Fe-2S] cluster pocket. Glutathione is bound by residues Arg-61, Phe-73, and 86-87 (CD).

This sequence belongs to the glutaredoxin family. Monothiol subfamily.

The protein is Probable monothiol glutaredoxin 2 (grxC2) of Rickettsia felis (strain ATCC VR-1525 / URRWXCal2) (Rickettsia azadi).